We begin with the raw amino-acid sequence, 373 residues long: Probable tRNA sulfurtransferase (373 aa).

Residues Asn54–Ile158 form the THUMP domain. Residues Leu176–Phe177, Asn201–Phe202, Lys256, Gly278, and Gln287 each bind ATP.

The protein belongs to the ThiI family.

The protein localises to the cytoplasm. It carries out the reaction [ThiI sulfur-carrier protein]-S-sulfanyl-L-cysteine + a uridine in tRNA + 2 reduced [2Fe-2S]-[ferredoxin] + ATP + H(+) = [ThiI sulfur-carrier protein]-L-cysteine + a 4-thiouridine in tRNA + 2 oxidized [2Fe-2S]-[ferredoxin] + AMP + diphosphate. The catalysed reaction is [ThiS sulfur-carrier protein]-C-terminal Gly-Gly-AMP + S-sulfanyl-L-cysteinyl-[cysteine desulfurase] + AH2 = [ThiS sulfur-carrier protein]-C-terminal-Gly-aminoethanethioate + L-cysteinyl-[cysteine desulfurase] + A + AMP + 2 H(+). Its pathway is cofactor biosynthesis; thiamine diphosphate biosynthesis. Catalyzes the ATP-dependent transfer of a sulfur to tRNA to produce 4-thiouridine in position 8 of tRNAs, which functions as a near-UV photosensor. Also catalyzes the transfer of sulfur to the sulfur carrier protein ThiS, forming ThiS-thiocarboxylate. This is a step in the synthesis of thiazole, in the thiamine biosynthesis pathway. The sulfur is donated as persulfide by IscS. This chain is Probable tRNA sulfurtransferase, found in Saccharolobus islandicus (strain Y.N.15.51 / Yellowstone #2) (Sulfolobus islandicus).